Reading from the N-terminus, the 165-residue chain is Large ribosomal subunit protein uL10 (165 aa).

This sequence belongs to the universal ribosomal protein uL10 family. Part of the ribosomal stalk of the 50S ribosomal subunit. The N-terminus interacts with L11 and the large rRNA to form the base of the stalk. The C-terminus forms an elongated spine to which L12 dimers bind in a sequential fashion forming a multimeric L10(L12)X complex.

Its function is as follows. Forms part of the ribosomal stalk, playing a central role in the interaction of the ribosome with GTP-bound translation factors. The polypeptide is Large ribosomal subunit protein uL10 (Serratia proteamaculans (strain 568)).